We begin with the raw amino-acid sequence, 68 residues long: Large ribosomal subunit protein bL32 (68 aa).

The interval 1–21 is disordered; the sequence is MAVQQNKVSKSRRNNRRAHDS.

Belongs to the bacterial ribosomal protein bL32 family.

In Roseobacter denitrificans (strain ATCC 33942 / OCh 114) (Erythrobacter sp. (strain OCh 114)), this protein is Large ribosomal subunit protein bL32.